The chain runs to 315 residues: MNPNFLDFEQPIADLQAKIEELRLVGNDNSLNISDEIARLQDKSSTLTESIFGNLTSWQIARLARHPRRPYTLDYIEHIFTEFEELHGDRHFSDDAAIVGGTARLNDKPVMVIGHQKGREVREKVRRNFGMPRPEGYRKACRLMEMAERFKMPILTFIDTPGAYPGIDAEERNQSEAIAWNLRVMARLKTPIIATVIGEGGSGGALAIGVCDQLNMLQYSTYSVISPEGCASILWKTADKAADAAEAMGITAERLKSLNIVDKVIQEPLGGAHRDPAKMAANVRADLIEQLDMLGKLDNDTLLKRRYDRLMSYGI.

The region spanning 39–293 (RLQDKSSTLT…RADLIEQLDM (255 aa)) is the CoA carboxyltransferase C-terminal domain.

This sequence belongs to the AccA family. As to quaternary structure, acetyl-CoA carboxylase is a heterohexamer composed of biotin carboxyl carrier protein (AccB), biotin carboxylase (AccC) and two subunits each of ACCase subunit alpha (AccA) and ACCase subunit beta (AccD).

It is found in the cytoplasm. It carries out the reaction N(6)-carboxybiotinyl-L-lysyl-[protein] + acetyl-CoA = N(6)-biotinyl-L-lysyl-[protein] + malonyl-CoA. It functions in the pathway lipid metabolism; malonyl-CoA biosynthesis; malonyl-CoA from acetyl-CoA: step 1/1. Component of the acetyl coenzyme A carboxylase (ACC) complex. First, biotin carboxylase catalyzes the carboxylation of biotin on its carrier protein (BCCP) and then the CO(2) group is transferred by the carboxyltransferase to acetyl-CoA to form malonyl-CoA. The chain is Acetyl-coenzyme A carboxylase carboxyl transferase subunit alpha from Pseudomonas entomophila (strain L48).